A 223-amino-acid polypeptide reads, in one-letter code: ATP-dependent dethiobiotin synthetase BioD (223 aa).

T16 is a Mg(2+) binding site. K37 is an active-site residue. S41 contributes to the substrate binding site. 2 residues coordinate Mg(2+): D50 and E111. ATP contacts are provided by residues D50, 111-114, and 171-172; these read EGAG and NR.

The protein belongs to the dethiobiotin synthetase family. In terms of assembly, homodimer. The cofactor is Mg(2+).

The protein resides in the cytoplasm. It catalyses the reaction (7R,8S)-7,8-diammoniononanoate + CO2 + ATP = (4R,5S)-dethiobiotin + ADP + phosphate + 3 H(+). It participates in cofactor biosynthesis; biotin biosynthesis; biotin from 7,8-diaminononanoate: step 1/2. Functionally, catalyzes a mechanistically unusual reaction, the ATP-dependent insertion of CO2 between the N7 and N8 nitrogen atoms of 7,8-diaminopelargonic acid (DAPA, also called 7,8-diammoniononanoate) to form a ureido ring. This Anaeromyxobacter dehalogenans (strain 2CP-C) protein is ATP-dependent dethiobiotin synthetase BioD.